A 59-amino-acid chain; its full sequence is Large ribosomal subunit protein uL30 (59 aa).

The protein belongs to the universal ribosomal protein uL30 family. Part of the 50S ribosomal subunit.

This chain is Large ribosomal subunit protein uL30, found in Alteromonas mediterranea (strain DSM 17117 / CIP 110805 / LMG 28347 / Deep ecotype).